The chain runs to 588 residues: MSGAQRRKTGCWTCRLRRKKCNEDGQPCSNCEARGVFCHGYGPKPSWKDRGEREREEAQRLQLISRARTRRARATPTNSINGEPRRPSIDMNTSDMGSPIQMGLGSSDSSIFETSSLDLLDIPELGSSLWEPTLDIIQVQPPPSDAPSALQFPSILGDGLEEKEIDLIMYYVVEVFPRQHSSYQGTSVMERSWLLCVLKRSSSFYYTSLSLSAHYRLMSMPEGGQGRTALLQEYERYKTCSLFRFQELVSSATRPQSPISTGVVGESVICGVQIAMLEAVSKNMQSSYLHLSSAALSLAQLLDNTSTLDSSSISTNTTPPSSVLTTDLYHAGSMEYKALRCFSIILIWNDILHCSAQQTIPAAAKTYQKLLADESFIPLFADIVGCEGWVLVPILEAMLLASWKKDQEAKGQLSIRELLTKVDHIESILGDRMKRLAPAVLRQKEAGISSQSPEQIRLVHTYIFAHASFVHLHTVVSGAQPSVPEIRQSIDKSLAAWQLLPPSLINFKTMAWPFCVCGSMAVGSQRELFQKIMSENFQNQSTSSNLHCLKSVVEECWKNFDKRVPEQSPSSYNWKVVMEKLNLSILFI.

The zn(2)-C6 fungal-type DNA-binding region spans 11–38; that stretch reads CWTCRLRRKKCNEDGQPCSNCEARGVFC. The tract at residues 68–92 is disordered; that stretch reads RTRRARATPTNSINGEPRRPSIDMN.

The protein resides in the nucleus. Transcription factor that regulates the expression of the gene cluster that mediates the biosynthesis of ustiloxin B, an antimitotic tetrapeptide. The polypeptide is ustiloxin B cluster transcription factor ustR (Aspergillus flavus (strain ATCC 200026 / FGSC A1120 / IAM 13836 / NRRL 3357 / JCM 12722 / SRRC 167)).